The following is a 301-amino-acid chain: tRNA dimethylallyltransferase (301 aa).

Residue 8–15 coordinates ATP; it reads GATGTGKS. Position 10 to 15 (10 to 15) interacts with substrate; sequence TGTGKS. The tract at residues 33–36 is interaction with substrate tRNA; it reads DSMQ.

The protein belongs to the IPP transferase family. As to quaternary structure, monomer. Mg(2+) serves as cofactor.

It catalyses the reaction adenosine(37) in tRNA + dimethylallyl diphosphate = N(6)-dimethylallyladenosine(37) in tRNA + diphosphate. Catalyzes the transfer of a dimethylallyl group onto the adenine at position 37 in tRNAs that read codons beginning with uridine, leading to the formation of N6-(dimethylallyl)adenosine (i(6)A). This Tropheryma whipplei (strain Twist) (Whipple's bacillus) protein is tRNA dimethylallyltransferase.